A 627-amino-acid polypeptide reads, in one-letter code: Probable inactive L-type lectin-domain containing receptor kinase III.1 (627 aa).

The signal sequence occupies residues 1–23; that stretch reads MITFKSIALTIIFLSYFVSCVSS. At 24-303 the chain is on the extracellular side; that stretch reads QRETKFLNHG…STEKKSNNTM (280 aa). The interval 26–262 is legume-lectin like; it reads ETKFLNHGFL…SHFVLGWSFN (237 aa). N-linked (GlcNAc...) asparagine glycans are attached at residues Asn-57, Asn-78, Asn-127, Asn-184, Asn-202, Asn-209, and Asn-230. The segment at 272-297 is disordered; it reads ITKLPSLPDPPPTLSPSPSPPVSTEK. The segment covering 278–292 has biased composition (pro residues); sequence LPDPPPTLSPSPSPP. Asn-300 is a glycosylation site (N-linked (GlcNAc...) asparagine). The helical transmembrane segment at 304-324 threads the bilayer; the sequence is LIIIVAASATVALMILIFSGF. Over 325–627 the chain is Cytoplasmic; it reads WFLRRDKIFF…PHDDYLFYGV (303 aa). The region spanning 353–623 is the Protein kinase domain; sequence FDNSKLLGER…TEALPHDDYL (271 aa). Residues 359 to 367 and Lys-381 contribute to the ATP site; that span reads LGERNSGSF.

This sequence in the C-terminal section; belongs to the protein kinase superfamily. Ser/Thr protein kinase family. In the N-terminal section; belongs to the leguminous lectin family.

The protein resides in the cell membrane. The sequence is that of Probable inactive L-type lectin-domain containing receptor kinase III.1 (LECRK31) from Arabidopsis thaliana (Mouse-ear cress).